Consider the following 361-residue polypeptide: DNA-(apurinic or apyrimidinic site) endonuclease (361 aa).

Positions 1-90 (MTSRTKKLKM…TNKTTASVSI (90 aa)) are disordered. Residues 25-39 (TSEEEKEEVEEEEEE) show a composition bias toward acidic residues. Positions 41–44 (KKRK) match the Nuclear localization signal motif. A compositionally biased stretch (basic residues) spans 43 to 64 (RKLVKKTPAKKAPAKKAAAKKK). Acidic residues predominate over residues 68-80 (EDEDEEEKEEEEE). Glu-139 lines the Mg(2+) pocket. Tyr-211 is an active-site residue. Residues Asp-252, Asn-254, and Asp-350 each coordinate Mg(2+). Asp-252 functions as the Proton donor/acceptor in the catalytic mechanism.

It belongs to the DNA repair enzymes AP/ExoA family. It depends on Mg(2+) as a cofactor. Mn(2+) is required as a cofactor.

It localises to the nucleus. The sequence is that of DNA-(apurinic or apyrimidinic site) endonuclease (apeA) from Dictyostelium discoideum (Social amoeba).